The following is a 37-amino-acid chain: Potassium channel toxin alpha-KTx 4.8 (37 aa).

Intrachain disulfides connect cysteine 13-cysteine 33 and cysteine 17-cysteine 35.

Belongs to the short scorpion toxin superfamily. Potassium channel inhibitor family. Alpha-KTx 04 subfamily. Expressed by the venom gland.

The protein resides in the secreted. Functionally, reversible blocker of voltage-gated potassium channel Kv1.2/KCNA2 (Kd=65 nM) and calcium-activated potassium channels KCa2.2/KCNN2 (Kd=575 nM) and KCa3.1/KCNN4 (Kd=59 nM). The sequence is that of Potassium channel toxin alpha-KTx 4.8 from Centruroides margaritatus (Central American bark Scorpion).